A 154-amino-acid polypeptide reads, in one-letter code: Egg-lysin (154 aa).

The first 18 residues, Met-1–Ser-18, serve as a signal peptide directing secretion.

Monomer. Homodimer. Molecules associate into dimers and then rapidly dissociate again. Interacts (as a monomer) with the egg vitelline layer protein VERL (via VERL repeats); each VERL chain can bind multiple copies of lysin. As to expression, sperm (at protein level).

It localises to the cytoplasmic vesicle. The protein localises to the secretory vesicle. The protein resides in the acrosome lumen. Creates a 3 um hole in the egg vitelline layer through which the sperm passes. Does not have enzyme activity. Species-specific interaction between the sperm protein lysin and the egg protein VERL exposes a basic surface on lysin that may dissociate the egg vitelline layer via electrostatic repulsion. Plays a role in ensuring species-specific fertilization. The protein is Egg-lysin of Haliotis rufescens (California red abalone).